A 432-amino-acid polypeptide reads, in one-letter code: MDEMILLRRVLLAGFICALLVPSGLSCGPGRGIGTRKRFKKLTPLAYKQFTPNVPEKTLGASGRYEGKITRNSERFKELTPNYNPDIIFKDEENTGADRLMTQRCKDKLNALAISVMNQWPGVKLRVTEGWDEDGHHFEESLHYEGRAVDITTSDRDRSKYGMLARLAAEAGFDWVYFESKAHIHCSVKAENSVAAKSGGCFPGSATVALEQGVRIPVKDLRPGDRVLAADGLGKLVYSDFLLFMDKEETVRKVFYVIETSRERVRLTAAHLLFVGQAHPGNDSGGDFRSVFGSAGFRSMFASSVRAGHRVLTVDREGRGLREATVERVYLEEATGAYAPVTAHGTVVIDRVLASCYAVIEEHSWAHWAFAPLRVGLGILSFFSPQDYSSHSPPAPSQSEGVHWYSEILYRIGTWVLQEDTIHPLGMAAKSS.

The first 26 residues, 1 to 26, serve as a signal peptide directing secretion; it reads MDEMILLRRVLLAGFICALLVPSGLS. The N-palmitoyl cysteine moiety is linked to residue Cys-27. The Cardin-Weintraub signature appears at 35 to 41; sequence TRKRFKK. Residues Glu-92, Glu-93, Asp-98, Thr-128, Glu-129, Asp-132, and Asp-134 each coordinate Ca(2+). Zn(2+)-binding residues include His-143, Asp-150, and His-185. Gly-200 carries the Cholesterol glycine ester lipid modification.

The protein belongs to the hedgehog family. In terms of assembly, interacts with HHATL/GUP1 which negatively regulates HHAT-mediated palmitoylation of the SHH N-terminus. Interacts with BOC and CDON. Interacts with HHIP. Interacts with DISP1 via its cholesterol anchor. Interacts with SCUBE2. Multimer. Post-translationally, the C-terminal domain displays an autoproteolysis activity and a cholesterol transferase activity. Both activities result in the cleavage of the full-length protein and covalent attachment of a cholesterol moiety to the C-terminal of the newly generated N-terminal fragment (ShhN). Cholesterylation is required for the sonic hedgehog protein N-product targeting to lipid rafts and multimerization. ShhN is the active species in both local and long-range signaling, whereas the C-product (ShhC) is degraded in the reticulum endoplasmic. In terms of processing, N-palmitoylation by HHAT of ShhN is required for sonic hedgehog protein N-product multimerization and full activity. It is a prerequisite for the membrane-proximal positioning and the subsequent shedding of this N-terminal peptide. The lipidated N- and C-terminal peptides of ShhNp can be cleaved (shedding). The N-terminal palmitoylated peptide is cleaved at the Cardin-Weintraub (CW) motif site. The cleavage reduced the interactions with heparan sulfate. The cleavage is enhanced by SCUBE2.

The protein resides in the endoplasmic reticulum membrane. It is found in the golgi apparatus membrane. Its subcellular location is the cell membrane. The enzyme catalyses glycyl-L-cysteinyl-[protein] + cholesterol + H(+) = [protein]-C-terminal glycyl cholesterol ester + N-terminal L-cysteinyl-[protein]. In terms of biological role, the C-terminal part of the sonic hedgehog protein precursor displays an autoproteolysis and a cholesterol transferase activity. Both activities result in the cleavage of the full-length protein into two parts (ShhN and ShhC) followed by the covalent attachment of a cholesterol moiety to the C-terminal of the newly generated ShhN. Both activities occur in the endoplasmic reticulum. Once cleaved, ShhC is degraded in the endoplasmic reticulum. Its function is as follows. The dually lipidated sonic hedgehog protein N-product (ShhNp) is a morphogen which is essential for a variety of patterning events during development. Induces ventral cell fate in the neural tube and somites. Involved in the patterning of the anterior-posterior axis of the developing limb bud. Essential for axon guidance. Binds to the patched (PTCH1) receptor, which functions in association with smoothened (SMO), to activate the transcription of target genes. In the absence of SHH, PTCH1 represses the constitutive signaling activity of SMO. This chain is Sonic hedgehog protein, found in Cynops pyrrhogaster (Japanese fire-bellied newt).